Reading from the N-terminus, the 138-residue chain is Large ribosomal subunit protein uL16 (138 aa).

The segment covering 1 to 17 (MLIPRKVKHRKQHHPRQ) has biased composition (basic residues). Residues 1 to 23 (MLIPRKVKHRKQHHPRQRGIASG) are disordered.

The protein belongs to the universal ribosomal protein uL16 family. Part of the 50S ribosomal subunit.

Binds 23S rRNA and is also seen to make contacts with the A and possibly P site tRNAs. This is Large ribosomal subunit protein uL16 from Mycobacterium sp. (strain JLS).